The sequence spans 1029 residues: MGPYCAPHPLSLLVQAAALAAALAQGTLPAFLPCELQPRGKVNCNWLFLKSVPRFSAGAPRANVTSLSLISNRIHHLHDSDFVHLSNLRVLNLKWNCPPAGLSPMHFPCRMTIEPNTFLAVPTLEELNLSYNGITTVPALPSSLVSLSLSRTSILVLGPTHFTGLHALRFLYMDGNCYYKNPCQQAVEVAPGALLGLGNLTHLSLKYNNLTEVPRRLPPSLDTLLLSYNHIITLAPEDLANLTALRVLDVGGNCRRCDHARNPCRECPKNFPKLHPDTFSHLSRLEGLVLKDSSLYKLEKDWFRGLGRLQVLDLSENFLYDYITKTTIFRNLTQLRRLNLSFNYHKKVSFAHLQLAPSFGGLVSLEKLDMHGIFFRSLTNTTLRPLTQLPKLQSLSLQLNFINQAELSIFGAFPSLLFVDLSDNRISGAARPVAALGEVDSGVEVWRWPRGLAPGPLAAVSAKDFMPSCNLNFTLDLSRNNLVTIQQEMFTRLSRLQCLRLSHNSISQAVNGSQFVPLTRLRVLDLSYNKLDLYHGRSFTELPQLEALDLSYNSQPFSMQGVGHNLSFVAQLPSLRYLSLAHNGIHSRVSQKLSSASLRALDFSGNSLSQMWAEGDLYLCFFKGLRNLVQLDLSKNHLHTLLPRHLDNLPKSLRQLRLRDNNLAFFNWSSLTVLPQLEALDLAGNQLKALSNGSLPPGTRLQKLDVSSNSIGFVTPGFFVLANRLKELNLSANALKTVDPFWFGRLTETLKILDVSANPLHCACGAAFVDFLLEMQAAVPGLSRRVTCGSPGQLQGRSIFAQDLRLCLDETLSLDCFGFSLLMVALGLAVPMLHHLCGWDLWYCFHLCLAHLPRRRRQRGEDTLLYDAFVVFDKAQSAVADWVYNELRVQLEERRGRRALRLCLEERDWLPGKTLFENLWASVYSSRKTMFVLDHTDRVSGLLRASFLLAQQRLLEDRKDVVVLVILRPAAYRSRYVRLRQRLCRQSVLLWPHQPSGQGSFWANLGMALTRDNRHFYNRNFCRGPTTAE.

A signal peptide spans 1 to 24; that stretch reads MGPYCAPHPLSLLVQAAALAAALA. Over 25 to 815 the chain is Extracellular; that stretch reads QGTLPAFLPC…LCLDETLSLD (791 aa). Cysteines 34 and 44 form a disulfide. 46–50 contacts DNA; sequence WLFLK. 26 LRR repeats span residues 61–84, 86–109, 121–146, 149–165, 166–189, 197–220, 222–241, 242–267, 282–305, 307–331, 332–355, 362–385, 389–412, 414–439, 469–492, 494–517, 518–541, 543–570, 572–596, 598–620, 625–648, 650–673, 674–697, 699–721, 722–745, and 747–770; these read RANVTSLSLISNRIHHLHDSDFVH, SNLRVLNLKWNCPPAGLSPMHFPC, VPTLEELNLSYNGITTVPALPSSLVS, LSRTSILVLGPTHFTGL, HALRFLYMDGNCYYKNPCQQAVEV, LGNLTHLSLKYNNLTEVPRRLPPS, DTLLLSYNHIITLAPEDLAN, LTALRVLDVGGNCRRCDHARNPCREC, LSRLEGLVLKDSSLYKLEKDWFRG, GRLQVLDLSENFLYDYITKTTIFRN, LTQLRRLNLSFNYHKKVSFAHLQL, LVSLEKLDMHGIFFRSLTNTTLRP, LPKLQSLSLQLNFINQAELSIFGA, PSLLFVDLSDNRISGAARPVAALGEV, CNLNFTLDLSRNNLVTIQQEMFTR, SRLQCLRLSHNSISQAVNGSQFVP, LTRLRVLDLSYNKLDLYHGRSFTE, PQLEALDLSYNSQPFSMQGVGHNLSFVA, LPSLRYLSLAHNGIHSRVSQKLSSA, LRALDFSGNSLSQMWAEGDLYLC, LRNLVQLDLSKNHLHTLLPRHLDN, PKSLRQLRLRDNNLAFFNWSSLTV, LPQLEALDLAGNQLKALSNGSLPP, TRLQKLDVSSNSIGFVTPGFFVL, ANRLKELNLSANALKTVDPFWFGR, and TETLKILDVSANPLHCACGAAFVD. Residue Asn63 is glycosylated (N-linked (GlcNAc...) asparagine). DNA-binding positions include 71 to 76 and 94 to 108; these read SNRIHH and KWNCPPAGLSPMHFP. An intrachain disulfide couples Cys97 to Cys109. Asn128 is a glycosylation site (N-linked (GlcNAc...) asparagine). Residues Tyr131, Arg151, and 178-180 each bind DNA; that span reads YYK. A disulfide bridge connects residues Cys177 and Cys183. An N-linked (GlcNAc...) asparagine glycan is attached at Asn199. A DNA-binding site is contributed by Tyr207. Asn209 and Asn241 each carry an N-linked (GlcNAc...) asparagine glycan. 2 disulfides stabilise this stretch: Cys254-Cys267 and Cys257-Cys264. A lipid anchor (S-palmitoyl cysteine) is attached at Cys257. Arg261 contacts DNA. The S-palmitoyl cysteine moiety is linked to residue Cys264. 3 N-linked (GlcNAc...) asparagine glycosylation sites follow: Asn331, Asn339, and Asn380. The cysteines at positions 469 and 498 are disulfide-linked. 2 N-linked (GlcNAc...) asparagine glycosylation sites follow: Asn472 and Asn511. Residue Asn565 is glycosylated (N-linked (GlcNAc...) asparagine). 2 N-linked (GlcNAc...) asparagine glycosylation sites follow: Asn667 and Asn692. A glycan (N-linked (GlcNAc...) asparagine) is linked at Asn729. Disulfide bonds link Cys762–Cys788 and Cys764–Cys807. The helical transmembrane segment at 816–836 threads the bilayer; it reads CFGFSLLMVALGLAVPMLHHL. The Cytoplasmic portion of the chain corresponds to 837-1029; it reads CGWDLWYCFH…NFCRGPTTAE (193 aa). One can recognise a TIR domain in the interval 864–1009; it reads LLYDAFVVFD…SFWANLGMAL (146 aa).

This sequence belongs to the Toll-like receptor family. As to quaternary structure, monomer and homodimer. Exists as a monomer in the absence of unmethylated cytidine-phosphate-guanosine (CpG) ligand. Proteolytic processing of an insertion loop (Z-loop) is required for homodimerization upon binding to the unmethylated CpG ligand leading to its activation. Interacts with MYD88 via their respective TIR domains. Interacts with BTK. Interacts (via transmembrane domain) with UNC93B1. Interacts with CD300LH; the interaction may promote full activation of TLR9-triggered innate responses. Interacts with CNPY3 and HSP90B1; this interaction is required for proper folding in the endoplasmic reticulum. Interacts with SMPDL3B. Interacts with CD82; this interaction is essential for TLR9-dependent myddosome formation in response to CpG stimulation. Activated by proteolytic cleavage of the flexible loop between repeats LRR14 and LRR15 within the ectodomain. Cleavage requires UNC93B1. Proteolytically processed by first removing the majority of the ectodomain by either asparagine endopeptidase (AEP) or a cathepsin followed by a trimming event that is solely cathepsin mediated and required for optimal receptor signaling. In terms of processing, palmitoylated by ZDHHC3 in the Golgi regulates TLR9 trafficking from the Golgi to endosomes. Depalmitoylation by PPT1 controls the release of TLR9 from UNC93B1 in endosomes.

It localises to the endoplasmic reticulum membrane. It is found in the endosome. Its subcellular location is the lysosome. The protein localises to the cytoplasmic vesicle. The protein resides in the phagosome. Functionally, key component of innate and adaptive immunity. TLRs (Toll-like receptors) control host immune response against pathogens through recognition of molecular patterns specific to microorganisms. TLR9 is a nucleotide-sensing TLR which is activated by unmethylated cytidine-phosphate-guanosine (CpG) dinucleotides. Acts via MYD88 and TRAF6, leading to NF-kappa-B activation, cytokine secretion and the inflammatory response. Upon CpG stimulation, induces B-cell proliferation, activation, survival and antibody production. The sequence is that of Toll-like receptor 9 (TLR9) from Ovis aries (Sheep).